The following is a 118-amino-acid chain: Putative pterin-4-alpha-carbinolamine dehydratase (118 aa).

This sequence belongs to the pterin-4-alpha-carbinolamine dehydratase family.

It carries out the reaction (4aS,6R)-4a-hydroxy-L-erythro-5,6,7,8-tetrahydrobiopterin = (6R)-L-erythro-6,7-dihydrobiopterin + H2O. In Pseudomonas entomophila (strain L48), this protein is Putative pterin-4-alpha-carbinolamine dehydratase.